The primary structure comprises 629 residues: EF-hand calcium-binding domain-containing protein 7 (629 aa).

The disordered stretch occupies residues 1–25 (MAISPRSDATFSSQKSTPSESPRTK). Residues 7 to 21 (SDATFSSQKSTPSES) show a composition bias toward polar residues. EF-hand domains lie at 102-137 (TSKAELLKSFKQLDVNDDGCILHTDLYKFLTKRGEK) and 138-173 (MTREEVNAIINLADVNADGKFDYIKFCKLYMTTNEQ). The tract at residues 195–229 (NHIEGSPERDPSPVPKPSPKITRKTDPETFLNKGD) is disordered. Ser-200 and Ser-212 each carry phosphoserine. The 36-residue stretch at 403–438 (EFKSTLSDIFEVIDLDGNGLLSLEEYNFFELRTSGE) folds into the EF-hand 3 domain. Positions 416, 418, 420, and 427 each coordinate Ca(2+).

In terms of assembly, component of the EvC complex composed of EFCAB7, IQCE, EVC2 and EVC; built from two subcomplexes, EVC2:EVC and EFCAB7:IQCE. Interacts (via EF-hand 1 and 2) with IQCE (via N-terminus); this interaction anchors the EVC-EVC2 complex in a signaling microdomain at the base of cilia and stimulates the Hedgehog (Hh) pathway. Interacts with EVC2 (via N-terminal end). Interacts with EVC.

It localises to the cell projection. It is found in the cilium membrane. In terms of biological role, component of the EvC complex that positively regulates ciliary Hedgehog (Hh) signaling. Required for the localization of the EVC2:EVC subcomplex at the base of primary cilia. This chain is EF-hand calcium-binding domain-containing protein 7 (EFCAB7), found in Homo sapiens (Human).